Reading from the N-terminus, the 686-residue chain is U-box domain-containing protein 19 (686 aa).

Residues 277-351 (LNVDDLRCPI…QSYSKQNGVV (75 aa)) enclose the U-box domain. 5 ARM repeats span residues 406 to 445 (TFYRSCLVEAGVVESLMKILRSDDPRIQENAMAGIMNLSK), 448 to 489 (AGKT…YLSS), 491 to 533 (GDYS…SLLM), 536 to 577 (PDNH…KMAE), and 579 to 620 (PDGM…NLCH).

The catalysed reaction is S-ubiquitinyl-[E2 ubiquitin-conjugating enzyme]-L-cysteine + [acceptor protein]-L-lysine = [E2 ubiquitin-conjugating enzyme]-L-cysteine + N(6)-ubiquitinyl-[acceptor protein]-L-lysine.. It functions in the pathway protein modification; protein ubiquitination. Functionally, functions as an E3 ubiquitin ligase. The chain is U-box domain-containing protein 19 (PUB19) from Arabidopsis thaliana (Mouse-ear cress).